A 304-amino-acid chain; its full sequence is Putative S-adenosyl-L-methionine-dependent methyltransferase YktD (304 aa).

Residues Asp-134 and 163–164 (DF) contribute to the S-adenosyl-L-methionine site.

This sequence belongs to the UPF0677 family.

Its function is as follows. May be involved in polyketide synthesis. This is Putative S-adenosyl-L-methionine-dependent methyltransferase YktD (yktD) from Bacillus subtilis (strain 168).